The primary structure comprises 192 residues: Ribosomal RNA large subunit methyltransferase E (192 aa).

Residues Gly-46, Trp-48, Asp-63, Asp-79, and Asp-102 each contribute to the S-adenosyl-L-methionine site. Catalysis depends on Lys-142, which acts as the Proton acceptor.

This sequence belongs to the class I-like SAM-binding methyltransferase superfamily. RNA methyltransferase RlmE family.

The protein resides in the cytoplasm. The catalysed reaction is uridine(2552) in 23S rRNA + S-adenosyl-L-methionine = 2'-O-methyluridine(2552) in 23S rRNA + S-adenosyl-L-homocysteine + H(+). Functionally, specifically methylates the uridine in position 2552 of 23S rRNA at the 2'-O position of the ribose in the fully assembled 50S ribosomal subunit. The protein is Ribosomal RNA large subunit methyltransferase E of Wolbachia pipientis wMel.